Here is a 271-residue protein sequence, read N- to C-terminus: (21S)-21-acetoxyl-apo-melianone synthase SDR (271 aa).

Ser150 acts as the Proton donor in catalysis. The active-site Proton acceptor is Tyr163. Lys167 functions as the Proton donor/acceptor in the catalytic mechanism.

This sequence belongs to the short-chain dehydrogenases/reductases (SDR) family. In terms of tissue distribution, mainly expressed in petioles.

The enzyme catalyses 21-O-acetyl-isomeliandiol + A = (21S)-21-acetoxyl-apo-melianone + AH2. It functions in the pathway secondary metabolite biosynthesis; terpenoid biosynthesis. Functionally, oxidoreductase involved in the biosynthesis of limonoids triterpene natural products such as azadirachtin, an antifeedant widely used as bioinsecticide, and possessing many medicinal applications including anti-tumoral, anti-malarial, anti-rheumatic, antibacterial, anti-inflammatory, anti-pyretic and diuretic effects. Catalyzes the oxidation of 21-O-acetyl-isomeliandiol to (21S)-21-acetoxyl-apo-melianone. The sequence is that of (21S)-21-acetoxyl-apo-melianone synthase SDR from Melia azedarach (Chinaberry tree).